The chain runs to 643 residues: Phosphomethylpyrimidine synthase (643 aa).

Substrate-binding positions include Asn248, Met277, Tyr306, His342, 362–364 (SRG), 403–406 (DGLR), and Glu442. His446 lines the Zn(2+) pocket. Tyr469 serves as a coordination point for substrate. His510 is a binding site for Zn(2+). The [4Fe-4S] cluster site is built by Cys590, Cys593, and Cys598.

The protein belongs to the ThiC family. Homodimer. It depends on [4Fe-4S] cluster as a cofactor.

It catalyses the reaction 5-amino-1-(5-phospho-beta-D-ribosyl)imidazole + S-adenosyl-L-methionine = 4-amino-2-methyl-5-(phosphooxymethyl)pyrimidine + CO + 5'-deoxyadenosine + formate + L-methionine + 3 H(+). The protein operates within cofactor biosynthesis; thiamine diphosphate biosynthesis. In terms of biological role, catalyzes the synthesis of the hydroxymethylpyrimidine phosphate (HMP-P) moiety of thiamine from aminoimidazole ribotide (AIR) in a radical S-adenosyl-L-methionine (SAM)-dependent reaction. The chain is Phosphomethylpyrimidine synthase from Burkholderia lata (strain ATCC 17760 / DSM 23089 / LMG 22485 / NCIMB 9086 / R18194 / 383).